We begin with the raw amino-acid sequence, 310 residues long: GPN-loop GTPase 2 (310 aa).

Ala2 bears the N-acetylalanine mark. Residue 19–24 (GSGKTT) coordinates GTP. Positions 76 to 78 (GPN) match the Gly-Pro-Asn (GPN)-loop; involved in dimer interface motif. Position 178-181 (178-181 (SKMD)) interacts with GTP.

This sequence belongs to the GPN-loop GTPase family. As to quaternary structure, heterodimers with GPN1 or GPN3. Binds to RNA polymerase II (RNAPII).

Small GTPase required for proper localization of RNA polymerase II and III (RNAPII and RNAPIII). May act at an RNAP assembly step prior to nuclear import. This chain is GPN-loop GTPase 2, found in Mus musculus (Mouse).